Consider the following 76-residue polypeptide: MNSVGEACTDMKREYDQCFNRWFAEKFLKGDSSGDPCTDLFKRYQQCVQKAIKEKEIPIEGLEFMGHGKEKPENSS.

Met1 is modified (N-acetylmethionine). Positions 1–52 (MNSVGEACTDMKREYDQCFNRWFAEKFLKGDSSGDPCTDLFKRYQQCVQKAI) form a coiled coil. A CHCH domain is found at 5 to 55 (GEACTDMKREYDQCFNRWFAEKFLKGDSSGDPCTDLFKRYQQCVQKAIKEK). 2 consecutive short sequence motifs (cx9C motif) follow at residues 8–18 (CTDMKREYDQC) and 37–47 (CTDLFKRYQQC). Intrachain disulfides connect Cys8-Cys47 and Cys18-Cys37.

It belongs to the TRIAP1/MDM35 family. In terms of assembly, monomer. Interacts with APAF1 and HSP70. Forms a complex with PRELID1 in the mitochondrion intermembrane space. Interacts with PRELID3A.

The protein localises to the mitochondrion. The protein resides in the mitochondrion intermembrane space. It carries out the reaction a 1,2-diacyl-sn-glycero-3-phosphate(in) = a 1,2-diacyl-sn-glycero-3-phosphate(out). In terms of biological role, involved in the modulation of the mitochondrial apoptotic pathway by ensuring the accumulation of cardiolipin (CL) in mitochondrial membranes. In vitro, the TRIAP1:PRELID1 complex mediates the transfer of phosphatidic acid (PA) between liposomes and probably functions as a PA transporter across the mitochondrion intermembrane space to provide PA for CL synthesis in the inner membrane. Likewise, the TRIAP1:PRELID3A complex mediates the transfer of phosphatidic acid (PA) between liposomes (in vitro) and probably functions as a PA transporter across the mitochondrion intermembrane space (in vivo). Mediates cell survival by inhibiting activation of caspase-9 which prevents induction of apoptosis. The sequence is that of TP53-regulated inhibitor of apoptosis 1 (TRIAP1) from Homo sapiens (Human).